The sequence spans 334 residues: RNA 3'-terminal phosphate cyclase (334 aa).

ATP is bound at residue 279-282 (HMGD). The active-site Tele-AMP-histidine intermediate is the H303.

This sequence belongs to the RNA 3'-terminal cyclase family. Type 1 subfamily.

Its subcellular location is the cytoplasm. It catalyses the reaction a 3'-end 3'-phospho-ribonucleotide-RNA + ATP = a 3'-end 2',3'-cyclophospho-ribonucleotide-RNA + AMP + diphosphate. In terms of biological role, catalyzes the conversion of 3'-phosphate to a 2',3'-cyclic phosphodiester at the end of RNA. The mechanism of action of the enzyme occurs in 3 steps: (A) adenylation of the enzyme by ATP; (B) transfer of adenylate to an RNA-N3'P to produce RNA-N3'PP5'A; (C) and attack of the adjacent 2'-hydroxyl on the 3'-phosphorus in the diester linkage to produce the cyclic end product. The biological role of this enzyme is unknown but it is likely to function in some aspects of cellular RNA processing. The chain is RNA 3'-terminal phosphate cyclase from Metallosphaera sedula (strain ATCC 51363 / DSM 5348 / JCM 9185 / NBRC 15509 / TH2).